A 307-amino-acid polypeptide reads, in one-letter code: Ras-related protein RabR (307 aa).

Positions Met-1–Ser-10 are enriched in polar residues. Residues Met-1–Asn-45 form a disordered region. Low complexity predominate over residues Thr-11 to Asn-45. Residue Gly-61 to Gly-68 coordinates GTP. The Effector region motif lies at Glu-83 to Arg-92. Position 122 to 126 (Asn-122 to His-126) interacts with GTP. Residues Asn-175–Ser-185 show a composition bias toward low complexity. A disordered region spans residues Asn-175–Pro-223. Positions Thr-186–Gln-202 are enriched in polar residues. Asn-230 to Asp-233 contacts GTP. The residue at position 304 (Cys-304) is a Cysteine methyl ester. Cys-304 is lipidated: S-geranylgeranyl cysteine. A propeptide spans Asn-305 to Met-307 (removed in mature form).

The protein belongs to the small GTPase superfamily. Rab family.

The protein localises to the cell membrane. This is Ras-related protein RabR (rabR) from Dictyostelium discoideum (Social amoeba).